A 969-amino-acid chain; its full sequence is Alpha-glucosidase (969 aa).

Residues 1–24 (MMISTAYQSLFLTALFSAISIAVG) form the signal peptide. 14 N-linked (GlcNAc...) asparagine glycosylation sites follow: Asn37, Asn67, Asn99, Asn116, Asn139, Asn146, Asn209, Asn245, Asn249, Asn331, Asn406, Asn429, Asn462, and Asn470. The active-site Nucleophile is the Asp481. Residue Glu484 is part of the active site. N-linked (GlcNAc...) asparagine glycans are attached at residues Asn520, Asn523, and Asn589. Catalysis depends on Asp647, which acts as the Proton donor. N-linked (GlcNAc...) asparagine glycans are attached at residues Asn648, Asn801, Asn810, Asn821, Asn885, Asn915, Asn934, Asn942, Asn954, and Asn966.

It belongs to the glycosyl hydrolase 31 family.

The protein resides in the secreted. It catalyses the reaction Hydrolysis of terminal, non-reducing (1-&gt;4)-linked alpha-D-glucose residues with release of alpha-D-glucose.. Hydrolyzes malto-oligosaccharides, but has a low activity toward soluble starch. In Schizosaccharomyces pombe (strain 972 / ATCC 24843) (Fission yeast), this protein is Alpha-glucosidase (agl1).